The sequence spans 551 residues: Probable malate:quinone oxidoreductase (551 aa).

Residues 525 to 544 are compositionally biased toward low complexity; the sequence is QTAAAAPQAQPQLKPQPDAK. The disordered stretch occupies residues 525-551; that stretch reads QTAAAAPQAQPQLKPQPDAKPVADIAL.

Belongs to the MQO family. FAD is required as a cofactor.

The catalysed reaction is (S)-malate + a quinone = a quinol + oxaloacetate. Its pathway is carbohydrate metabolism; tricarboxylic acid cycle; oxaloacetate from (S)-malate (quinone route): step 1/1. This Enterobacter sp. (strain 638) protein is Probable malate:quinone oxidoreductase.